Here is a 256-residue protein sequence, read N- to C-terminus: 5'-nucleotidase SurE (256 aa).

The a divalent metal cation site is built by Asp9, Asp10, Ser42, and Asn99.

This sequence belongs to the SurE nucleotidase family. A divalent metal cation serves as cofactor.

The protein localises to the cytoplasm. The catalysed reaction is a ribonucleoside 5'-phosphate + H2O = a ribonucleoside + phosphate. Nucleotidase that shows phosphatase activity on nucleoside 5'-monophosphates. The sequence is that of 5'-nucleotidase SurE from Symbiobacterium thermophilum (strain DSM 24528 / JCM 14929 / IAM 14863 / T).